Consider the following 484-residue polypeptide: Putative transporter B0252.3 (484 aa).

Helical transmembrane passes span 43-63, 95-115, 121-141, 144-164, 183-203, 208-228, 286-306, 321-341, 348-368, 373-393, and 433-453; these read ILTCILVCGLAWSPLAFTGLC, STTTFYMVGNMIGGMFIPPLA, LPVFVATVLLMAVGGMISAFS, IMMFCIMRMIHGIFYTAAGLA, VYFGVMWVVGACFLGLLAYIL, YLMFCISVPNIFVALLIYMTV, MFIVYVLVMTYIWIVDTFIYF, LNFVLMSLVEAPAYIFSPIFM, VLISGTHIIAGLSFLGIVLSS, IHFWLLGKFAISCSFMSIYMF, and LAPAITLSLIAVSGGLLTLIL.

This sequence belongs to the major facilitator superfamily. Sugar transporter (TC 2.A.1.1) family.

Its subcellular location is the membrane. This Caenorhabditis elegans protein is Putative transporter B0252.3.